An 823-amino-acid chain; its full sequence is Apoptosis-resistant E3 ubiquitin protein ligase 1 (823 aa).

The Filamin repeat unit spans residues Trp-64–Phe-158. The interval Pro-315–Glu-345 is disordered. Residues Ser-483–Thr-789 are interaction with SOCS2. The 341-residue stretch at Ser-483–Leu-823 folds into the HECT domain. Residue Cys-790 is the Glycyl thioester intermediate of the active site.

As to quaternary structure, interacts with SOCS2. Interacts (via HECT domain) with HTRA2, DIABLO/SMAC and SEPTIN4; in the cytoplasm following induction of apoptosis. In terms of processing, autoubiquitinated in vitro in the presence of E2 enzyme UBE2D1/UBCH5A. Detected in brain, testis, heart, liver, lung and kidney with very low levels in skeletal muscle and spleen.

It carries out the reaction S-ubiquitinyl-[E2 ubiquitin-conjugating enzyme]-L-cysteine + [acceptor protein]-L-lysine = [E2 ubiquitin-conjugating enzyme]-L-cysteine + N(6)-ubiquitinyl-[acceptor protein]-L-lysine.. It functions in the pathway protein modification; protein ubiquitination. Its function is as follows. E3 ubiquitin-protein ligase that catalyzes 'Lys-11'- or 'Lys-33'-linked polyubiquitin chains, with some preference for 'Lys-33' linkages. E3 ubiquitin-protein ligases accept ubiquitin from an E2 ubiquitin-conjugating enzyme in the form of a thioester and then directly transfers the ubiquitin to targeted substrates. Ubiquitinates SEPTIN4, DIABLO/SMAC and HTRA2 in vitro. Modulates pulmonary inflammation by targeting SOCS2 for ubiquitination and subsequent degradation by the proteasome. In Mus musculus (Mouse), this protein is Apoptosis-resistant E3 ubiquitin protein ligase 1 (Arel1).